Reading from the N-terminus, the 110-residue chain is Nucleoid-associated protein Sfri_2406 (110 aa).

It belongs to the YbaB/EbfC family. As to quaternary structure, homodimer.

The protein localises to the cytoplasm. It is found in the nucleoid. Its function is as follows. Binds to DNA and alters its conformation. May be involved in regulation of gene expression, nucleoid organization and DNA protection. In Shewanella frigidimarina (strain NCIMB 400), this protein is Nucleoid-associated protein Sfri_2406.